The chain runs to 292 residues: 4-hydroxy-tetrahydrodipicolinate synthase (292 aa).

Pyruvate is bound at residue threonine 45. Tyrosine 133 serves as the catalytic Proton donor/acceptor. Lysine 161 functions as the Schiff-base intermediate with substrate in the catalytic mechanism. Isoleucine 203 is a binding site for pyruvate.

The protein belongs to the DapA family. In terms of assembly, homotetramer; dimer of dimers.

It is found in the cytoplasm. The enzyme catalyses L-aspartate 4-semialdehyde + pyruvate = (2S,4S)-4-hydroxy-2,3,4,5-tetrahydrodipicolinate + H2O + H(+). The protein operates within amino-acid biosynthesis; L-lysine biosynthesis via DAP pathway; (S)-tetrahydrodipicolinate from L-aspartate: step 3/4. Catalyzes the condensation of (S)-aspartate-beta-semialdehyde [(S)-ASA] and pyruvate to 4-hydroxy-tetrahydrodipicolinate (HTPA). The polypeptide is 4-hydroxy-tetrahydrodipicolinate synthase (Vibrio cholerae serotype O1 (strain M66-2)).